Here is a 421-residue protein sequence, read N- to C-terminus: D-amino acid dehydrogenase (421 aa).

3–17 serves as a coordination point for FAD; sequence VIVLGSGVIGVASAY.

It belongs to the DadA oxidoreductase family. It depends on FAD as a cofactor.

It carries out the reaction a D-alpha-amino acid + A + H2O = a 2-oxocarboxylate + AH2 + NH4(+). It functions in the pathway amino-acid degradation; D-alanine degradation; NH(3) and pyruvate from D-alanine: step 1/1. Oxidative deamination of D-amino acids. The sequence is that of D-amino acid dehydrogenase from Acinetobacter baumannii (strain AB307-0294).